The following is a 596-amino-acid chain: Serine/arginine (SR)-type shuttling mRNA binding protein (596 aa).

Polar residues predominate over residues 1–11; the sequence is MSEVEYNQENT. Disordered stretches follow at residues 1–83 and 244–279; these read MSEV…SRKS and DRED…FGPP. Composition is skewed to basic and acidic residues over residues 12–23 and 42–66; these read HYAEVDNFDRDA and SDRR…RSFN. An RRM 1 domain is found at 182-246; it reads FHRQPSIVYT…RQVFVREDRE (65 aa). Residues 259 to 275 show a composition bias toward gly residues; the sequence is PRGGGRGGLGGSSGRGS. The region spanning 302-379 is the RRM 2 domain; that stretch reads TQLFIGNLPF…RMLEVRLDKF (78 aa). The tract at residues 458-478 is disordered; the sequence is GYSTRASGPTSARAPAPPAAP. Positions 480 to 556 constitute an RRM 3 domain; sequence QQIFVKNLPW…RPLDIEFNRR (77 aa). Residues 563-572 show a composition bias toward gly residues; sequence GGGSVNGGND. Residues 563 to 596 are disordered; it reads GGGSVNGGNDGNAPMVEVSAQDDEDGDAPVPMQG.

Its subcellular location is the nucleus. Its function is as follows. Binds to intron-containing transcripts and is involved in quality control for the export of spliced mRNAs from the nucleus. Binds to pre-mRNAs until splicing is completed or until faulty mRNAs are degraded. This chain is Serine/arginine (SR)-type shuttling mRNA binding protein, found in Mycosarcoma maydis (Corn smut fungus).